Consider the following 196-residue polypeptide: MLDRIKACFTESIQTQIAAAEALPDAISRAAMTLVQSLLNGNKILCCGNGTSAANAQHFAASMINRFETERPSLPAIALNADNVVLTAITNDRLHDEVYAKQVRALGHAGDVLLAISTRGNSRDIVKAVEAAVTRDMTIVALTGYDGGELAGLLGQQDVEIRIPSHRSARIQEMHMLTVNCLCDLIDSTLFPHQDE.

One can recognise an SIS domain in the interval 34–196 (LVQSLLNGNK…DSTLFPHQDE (163 aa)).

This sequence belongs to the SIS family. DiaA subfamily. Homotetramer; dimer of dimers.

Functionally, required for the timely initiation of chromosomal replication via direct interactions with the DnaA initiator protein. This Serratia proteamaculans (strain 568) protein is DnaA initiator-associating protein DiaA.